A 335-amino-acid polypeptide reads, in one-letter code: Anthranilate phosphoribosyltransferase (335 aa).

Residues G80, 83–84 (GD), T88, 90–93 (NIST), 108–116 (KHGNRAVSS), and S120 each bind 5-phospho-alpha-D-ribose 1-diphosphate. G80 contacts anthranilate. Residue S92 participates in Mg(2+) binding. N111 serves as a coordination point for anthranilate. R166 is a binding site for anthranilate. Mg(2+) contacts are provided by D225 and E226.

The protein belongs to the anthranilate phosphoribosyltransferase family. In terms of assembly, homodimer. Mg(2+) serves as cofactor.

The enzyme catalyses N-(5-phospho-beta-D-ribosyl)anthranilate + diphosphate = 5-phospho-alpha-D-ribose 1-diphosphate + anthranilate. It participates in amino-acid biosynthesis; L-tryptophan biosynthesis; L-tryptophan from chorismate: step 2/5. Catalyzes the transfer of the phosphoribosyl group of 5-phosphorylribose-1-pyrophosphate (PRPP) to anthranilate to yield N-(5'-phosphoribosyl)-anthranilate (PRA). The polypeptide is Anthranilate phosphoribosyltransferase (Clostridium kluyveri (strain NBRC 12016)).